A 264-amino-acid chain; its full sequence is Thiazole synthase (264 aa).

The active-site Schiff-base intermediate with DXP is lysine 101. Residues glycine 162, 188–189 (AG), and 210–211 (NT) contribute to the 1-deoxy-D-xylulose 5-phosphate site.

This sequence belongs to the ThiG family. Homotetramer. Forms heterodimers with either ThiH or ThiS.

It is found in the cytoplasm. It carries out the reaction [ThiS sulfur-carrier protein]-C-terminal-Gly-aminoethanethioate + 2-iminoacetate + 1-deoxy-D-xylulose 5-phosphate = [ThiS sulfur-carrier protein]-C-terminal Gly-Gly + 2-[(2R,5Z)-2-carboxy-4-methylthiazol-5(2H)-ylidene]ethyl phosphate + 2 H2O + H(+). It functions in the pathway cofactor biosynthesis; thiamine diphosphate biosynthesis. Its function is as follows. Catalyzes the rearrangement of 1-deoxy-D-xylulose 5-phosphate (DXP) to produce the thiazole phosphate moiety of thiamine. Sulfur is provided by the thiocarboxylate moiety of the carrier protein ThiS. In vitro, sulfur can be provided by H(2)S. The chain is Thiazole synthase from Chromobacterium violaceum (strain ATCC 12472 / DSM 30191 / JCM 1249 / CCUG 213 / NBRC 12614 / NCIMB 9131 / NCTC 9757 / MK).